The chain runs to 373 residues: MSMSRGGNTTLDLQPLLAESDVGNRELEEKMGGSADRSSLLDGSGSKELSHREREDSALFVKKIGSALFYGLSSFMITVVNKTVLTSYHFPSFLFLSLGQLTASIVVLGMGKRLKLVNFPPLQRNTFAKIFPLPLIFLGNMMFGLGGTKTLSLPMFAALRRFSILMTMLLELKILGLRPSNAVQVSVYAMIGGALLAASDDLSFNMRGYIYVMITNALTASNGVYVKKKLDTSEIGKYGLMYYNSLFMFLPALALNYVTGNLDQALNFEQWNDSVFVVQFLLSCVMGFILSYSTILCTQFNSALTTTIVGCLKNICVTYLGMFIGGDYVFSWLNCIGINISVLASLLYTYVTFRRKRAPDKQDHLPSTRGENV.

The disordered stretch occupies residues 27–49 (LEEKMGGSADRSSLLDGSGSKEL). Serine 50 carries the phosphoserine modification. 8 helical membrane passes run 89-111 (HFPS…LGMG), 131-153 (FPLP…TLSL), 174-196 (ILGL…GALL), 206-225 (MRGY…NGVY), 238-260 (YGLM…YVTG), 275-297 (VFVV…TILC), 302-324 (SALT…GMFI), and 329-351 (VFSW…YTYV).

Belongs to the TPT transporter family. SLC35D subfamily.

It localises to the golgi apparatus membrane. Its function is as follows. Involved in the import of UDP-sugars from the cytoplasm into the Golgi lumen. This Drosophila melanogaster (Fruit fly) protein is UDP-sugar transporter UST74c (frc).